Consider the following 322-residue polypeptide: Breast cancer metastasis-suppressor 1-like protein (322 aa).

Residues 1 to 16 (MPVHSREKKESNHNDM) are compositionally biased toward basic and acidic residues. The disordered stretch occupies residues 1 to 56 (MPVHSREKKESNHNDMEVDYPENEGSSSEEDDSDSSSGSEEGDSSEMDDEDCERRR). Over residues 17–51 (EVDYPENEGSSSEEDDSDSSSGSEEGDSSEMDDED) the composition is skewed to acidic residues. 2 coiled-coil regions span residues 50-99 (EDCE…QAQE) and 147-178 (EKLL…ITSE).

It belongs to the BRMS1 family.

The protein localises to the nucleus. Involved in the histone deacetylase (HDAC1)-dependent transcriptional repression activity. This is Breast cancer metastasis-suppressor 1-like protein (brms1l) from Xenopus laevis (African clawed frog).